A 469-amino-acid chain; its full sequence is Ribulose bisphosphate carboxylase large chain (469 aa).

An N6,N6,N6-trimethyllysine modification is found at Lys5. Substrate-binding residues include Asn114 and Thr164. Residue Lys166 is the Proton acceptor of the active site. Position 168 (Lys168) interacts with substrate. Lys192, Asp194, and Glu195 together coordinate Mg(2+). N6-carboxylysine is present on Lys192. Catalysis depends on His285, which acts as the Proton acceptor. Arg286, His318, and Ser370 together coordinate substrate.

This sequence belongs to the RuBisCO large chain family. Type I subfamily. As to quaternary structure, heterohexadecamer of 8 large chains and 8 small chains; disulfide-linked. The disulfide link is formed within the large subunit homodimers. Mg(2+) is required as a cofactor. The disulfide bond which can form in the large chain dimeric partners within the hexadecamer appears to be associated with oxidative stress and protein turnover.

Its subcellular location is the plastid. It is found in the chloroplast. It carries out the reaction 2 (2R)-3-phosphoglycerate + 2 H(+) = D-ribulose 1,5-bisphosphate + CO2 + H2O. The enzyme catalyses D-ribulose 1,5-bisphosphate + O2 = 2-phosphoglycolate + (2R)-3-phosphoglycerate + 2 H(+). Functionally, ruBisCO catalyzes two reactions: the carboxylation of D-ribulose 1,5-bisphosphate, the primary event in carbon dioxide fixation, as well as the oxidative fragmentation of the pentose substrate in the photorespiration process. Both reactions occur simultaneously and in competition at the same active site. In Nicandra physalodes (Apple-of-Peru), this protein is Ribulose bisphosphate carboxylase large chain.